The chain runs to 101 residues: DNA-binding protein TubR (101 aa).

Homodimer. Dimers bind to DNA, forming a protein-bound filament which may form a helix around the TubZ filament.

A DNA-binding protein that is part of the type III plasmid partition system used to ensure correct segregation of the pBM400 plasmid. Binds the plasmid origin of replication, probably cooperatively, forming a ring or short helix with external DNA. Its effect on RNA expression has not been shown. This is DNA-binding protein TubR from Priestia megaterium (strain ATCC 12872 / QMB1551) (Bacillus megaterium).